The following is a 288-amino-acid chain: Glycine--tRNA ligase alpha subunit (288 aa).

Belongs to the class-II aminoacyl-tRNA synthetase family. Tetramer of two alpha and two beta subunits.

The protein localises to the cytoplasm. It carries out the reaction tRNA(Gly) + glycine + ATP = glycyl-tRNA(Gly) + AMP + diphosphate. This chain is Glycine--tRNA ligase alpha subunit, found in Rickettsia massiliae (strain Mtu5).